Consider the following 822-residue polypeptide: Glycerol-3-phosphate acyltransferase (822 aa).

Residues 304-309 (CHRSHM) carry the HXXXXD motif motif.

Belongs to the GPAT/DAPAT family.

Its subcellular location is the cell inner membrane. The enzyme catalyses sn-glycerol 3-phosphate + an acyl-CoA = a 1-acyl-sn-glycero-3-phosphate + CoA. The protein operates within phospholipid metabolism; CDP-diacylglycerol biosynthesis; CDP-diacylglycerol from sn-glycerol 3-phosphate: step 1/3. This is Glycerol-3-phosphate acyltransferase from Yersinia enterocolitica serotype O:8 / biotype 1B (strain NCTC 13174 / 8081).